Reading from the N-terminus, the 103-residue chain is IQSLPLLALLALSGPGTSHAAVNQHLCGSHLVEALYLVCGERGFFYSPKARRDAEHPLVNGPLHGEVGDLPFQQEEFEKVKRGIVEQCCHNTCSLYQLENYCN.

Residues 1-20 form the signal peptide; sequence IQSLPLLALLALSGPGTSHA. Disulfide bonds link Cys-27–Cys-89, Cys-39–Cys-102, and Cys-88–Cys-93. Positions 53–80 are cleaved as a propeptide — c peptide; that stretch reads DAEHPLVNGPLHGEVGDLPFQQEEFEKV.

It belongs to the insulin family. In terms of assembly, heterodimer of a B chain and an A chain linked by two disulfide bonds.

The protein resides in the secreted. In terms of biological role, insulin decreases blood glucose concentration. It increases cell permeability to monosaccharides, amino acids and fatty acids. It accelerates glycolysis, the pentose phosphate cycle, and glycogen synthesis in liver. The protein is Insulin (INS) of Selasphorus rufus (Rufous hummingbird).